We begin with the raw amino-acid sequence, 118 residues long: NADH-quinone oxidoreductase subunit A (118 aa).

The next 3 helical transmembrane spans lie at 5–25, 61–81, and 90–110; these read FAAV…MMLM, FLYA…FPWA, and FAFI…WYAW.

The protein belongs to the complex I subunit 3 family. In terms of assembly, NDH-1 is composed of 14 different subunits. Subunits NuoA, H, J, K, L, M, N constitute the membrane sector of the complex.

It is found in the cell membrane. It catalyses the reaction a quinone + NADH + 5 H(+)(in) = a quinol + NAD(+) + 4 H(+)(out). NDH-1 shuttles electrons from NADH, via FMN and iron-sulfur (Fe-S) centers, to quinones in the respiratory chain. The immediate electron acceptor for the enzyme in this species is believed to be a menaquinone. Couples the redox reaction to proton translocation (for every two electrons transferred, four hydrogen ions are translocated across the cytoplasmic membrane), and thus conserves the redox energy in a proton gradient. The protein is NADH-quinone oxidoreductase subunit A of Desulfitobacterium hafniense (strain Y51).